The chain runs to 176 residues: Thiol:disulfide interchange protein HelX (176 aa).

The N-terminal stretch at 1–19 is a signal peptide; that stretch reads MAKPLMFLPLLVMAGFVGA. One can recognise a Thioredoxin domain in the interval 35 to 172; that stretch reads ALAGKEAPAV…ITKKIDPLLA (138 aa). Cysteines 75 and 78 form a disulfide.

Belongs to the thioredoxin family. DsbE subfamily.

Its subcellular location is the periplasm. Functionally, required for disulfide bond formation in some periplasmic proteins. Also acts as a disulfide oxidoreductase in cytochromes c biogenesis. The cysteines of apocytochromes c must be in the reduced state for covalent linkage between the two moieties to occur. The polypeptide is Thiol:disulfide interchange protein HelX (helX) (Rhodobacter capsulatus (strain ATCC BAA-309 / NBRC 16581 / SB1003)).